Here is a 189-residue protein sequence, read N- to C-terminus: Elongation factor P (189 aa).

This sequence belongs to the elongation factor P family.

It is found in the cytoplasm. Its pathway is protein biosynthesis; polypeptide chain elongation. Involved in peptide bond synthesis. Stimulates efficient translation and peptide-bond synthesis on native or reconstituted 70S ribosomes in vitro. Probably functions indirectly by altering the affinity of the ribosome for aminoacyl-tRNA, thus increasing their reactivity as acceptors for peptidyl transferase. The sequence is that of Elongation factor P from Campylobacter lari (strain RM2100 / D67 / ATCC BAA-1060).